A 98-amino-acid polypeptide reads, in one-letter code: NADH-ubiquinone oxidoreductase chain 4L (98 aa).

Helical transmembrane passes span 1 to 21 (MTSI…GVLI), 28 to 48 (STLL…ALLI), and 59 to 79 (APLI…ALLV).

The protein belongs to the complex I subunit 4L family. Core subunit of respiratory chain NADH dehydrogenase (Complex I) which is composed of 45 different subunits.

It localises to the mitochondrion inner membrane. The enzyme catalyses a ubiquinone + NADH + 5 H(+)(in) = a ubiquinol + NAD(+) + 4 H(+)(out). Core subunit of the mitochondrial membrane respiratory chain NADH dehydrogenase (Complex I) which catalyzes electron transfer from NADH through the respiratory chain, using ubiquinone as an electron acceptor. Part of the enzyme membrane arm which is embedded in the lipid bilayer and involved in proton translocation. In Vombatus ursinus (Common wombat), this protein is NADH-ubiquinone oxidoreductase chain 4L (MT-ND4L).